Reading from the N-terminus, the 273-residue chain is Urease accessory protein UreD (273 aa).

The protein belongs to the UreD family. UreD, UreF and UreG form a complex that acts as a GTP-hydrolysis-dependent molecular chaperone, activating the urease apoprotein by helping to assemble the nickel containing metallocenter of UreC. The UreE protein probably delivers the nickel.

The protein resides in the cytoplasm. Its function is as follows. Required for maturation of urease via the functional incorporation of the urease nickel metallocenter. This chain is Urease accessory protein UreD, found in Mycolicibacterium gilvum (strain PYR-GCK) (Mycobacterium gilvum (strain PYR-GCK)).